Reading from the N-terminus, the 218-residue chain is Peptide deformylase 1 (218 aa).

Residues cysteine 126 and histidine 168 each coordinate Fe cation. The active site involves glutamate 169. Histidine 172 serves as a coordination point for Fe cation.

Belongs to the polypeptide deformylase family. Fe(2+) is required as a cofactor.

It catalyses the reaction N-terminal N-formyl-L-methionyl-[peptide] + H2O = N-terminal L-methionyl-[peptide] + formate. In terms of biological role, removes the formyl group from the N-terminal Met of newly synthesized proteins. Requires at least a dipeptide for an efficient rate of reaction. N-terminal L-methionine is a prerequisite for activity but the enzyme has broad specificity at other positions. This Streptomyces coelicolor (strain ATCC BAA-471 / A3(2) / M145) protein is Peptide deformylase 1.